A 431-amino-acid chain; its full sequence is Shaggy-related protein kinase beta (431 aa).

Over residues S12–E24 the composition is skewed to polar residues. The segment at S12–I65 is disordered. Basic and acidic residues-rich tracts occupy residues E26–T39 and S46–I65. Residues Y102–F386 form the Protein kinase domain. Residues I108–V116 and K131 contribute to the ATP site. Residue D227 is the Proton acceptor of the active site. Phosphotyrosine is present on Y262.

Belongs to the protein kinase superfamily. CMGC Ser/Thr protein kinase family. GSK-3 subfamily. In terms of processing, autophosphorylated mainly on threonine and serine residues.

The enzyme catalyses L-seryl-[protein] + ATP = O-phospho-L-seryl-[protein] + ADP + H(+). It carries out the reaction L-threonyl-[protein] + ATP = O-phospho-L-threonyl-[protein] + ADP + H(+). Functionally, may mediate extracellular signals to regulate transcription in differentiating cells. This Arabidopsis thaliana (Mouse-ear cress) protein is Shaggy-related protein kinase beta.